Here is a 199-residue protein sequence, read N- to C-terminus: Small ribosomal subunit protein uS5 (199 aa).

Residues 1–29 (MATAGRRGGAASERRERRESRRQEASPEK) are disordered. Basic and acidic residues predominate over residues 12 to 27 (SERRERRESRRQEASP). The 64-residue stretch at 32-95 (FLERVVTINR…EEAKKHFFTV (64 aa)) folds into the S5 DRBM domain.

The protein belongs to the universal ribosomal protein uS5 family. In terms of assembly, part of the 30S ribosomal subunit. Contacts proteins S4 and S8.

Functionally, with S4 and S12 plays an important role in translational accuracy. Located at the back of the 30S subunit body where it stabilizes the conformation of the head with respect to the body. The protein is Small ribosomal subunit protein uS5 of Acidothermus cellulolyticus (strain ATCC 43068 / DSM 8971 / 11B).